The chain runs to 84 residues: MFSARLVLVFAVVLCIQLCNASWLDERAMTQEKRCNGKYQKCTSNSQCCDQKDYAKRKLRCLTQCDEGGCMKYKQCMFYAGTQK.

The signal sequence occupies residues 1 to 21 (MFSARLVLVFAVVLCIQLCNA). The propeptide occupies 22 to 34 (SWLDERAMTQEKR).

This sequence belongs to the sea anemone type 5 potassium channel toxin family. In terms of processing, contains 4 disulfide bonds. As to expression, in unfertilized eggs and early post-fertilization stages, is expressed uniformly. In gastrulae, the expression becomes spatially-localized and seems to be absent from the oral and aboral poles. In planulae, the expression is clearly observed in the ectoderm in packed gland cells absent from the two body poles, and upon metamorphosis, the expression diminishes. There is two types of gland cells, one large and elongated and another small and round. This toxin is maternally deposited at both protein and RNA levels.

Its subcellular location is the secreted. The protein resides in the nematocyst. Neurotoxin that is probably only defensive. Acts as a voltage-gated potassium channel (Kv) inhibitor. In vivo, induces a rapid increase in swimming speed on zebrafish larvae, as well as death which occurs between 2 and 18 hours later. This is Toxin NvePTx1 from Nematostella vectensis (Starlet sea anemone).